The chain runs to 119 residues: Flagellar transcriptional regulator FlhD (119 aa).

The protein belongs to the FlhD family. As to quaternary structure, homodimer; disulfide-linked. Forms a heterohexamer composed of two FlhC and four FlhD subunits. Each FlhC binds a FlhD dimer, forming a heterotrimer, and a hexamer assembles by dimerization of two heterotrimers.

The protein localises to the cytoplasm. Its function is as follows. Functions in complex with FlhC as a master transcriptional regulator that regulates transcription of several flagellar and non-flagellar operons by binding to their promoter region. Activates expression of class 2 flagellar genes, including fliA, which is a flagellum-specific sigma factor that turns on the class 3 genes. Also regulates genes whose products function in a variety of physiological pathways. This Cronobacter sakazakii (strain ATCC BAA-894) (Enterobacter sakazakii) protein is Flagellar transcriptional regulator FlhD.